A 130-amino-acid polypeptide reads, in one-letter code: Large ribosomal subunit protein bL12 (130 aa).

This sequence belongs to the bacterial ribosomal protein bL12 family. In terms of assembly, homodimer. Part of the ribosomal stalk of the 50S ribosomal subunit. Forms a multimeric L10(L12)X complex, where L10 forms an elongated spine to which 2 to 4 L12 dimers bind in a sequential fashion. Binds GTP-bound translation factors.

Functionally, forms part of the ribosomal stalk which helps the ribosome interact with GTP-bound translation factors. Is thus essential for accurate translation. The polypeptide is Large ribosomal subunit protein bL12 (Parafrankia sp. (strain EAN1pec)).